We begin with the raw amino-acid sequence, 214 residues long: Cytochrome b (214 aa).

Transmembrane regions (helical) follow at residues 31–51, 75–96, 111–131, and 176–196; these read FGSM…FLAI, WIMQ…YIHI, WLSG…GYVL, and FFAL…IHIL. Residues histidine 81 and histidine 95 each contribute to the heme b site. Heme b-binding residues include histidine 180 and histidine 194. Histidine 199 is an a ubiquinone binding site.

It belongs to the cytochrome b family. As to quaternary structure, the cytochrome bc1 complex contains 3 respiratory subunits (MT-CYB, CYC1 and UQCRFS1), 2 core proteins (UQCRC1 and UQCRC2) and probably 6 low-molecular weight proteins. Heme b is required as a cofactor.

The protein resides in the mitochondrion inner membrane. In terms of biological role, component of the ubiquinol-cytochrome c reductase complex (complex III or cytochrome b-c1 complex) that is part of the mitochondrial respiratory chain. The b-c1 complex mediates electron transfer from ubiquinol to cytochrome c. Contributes to the generation of a proton gradient across the mitochondrial membrane that is then used for ATP synthesis. This chain is Cytochrome b (MT-CYB), found in Agkistrodon contortrix contortrix (Southern copperhead).